Here is a 212-residue protein sequence, read N- to C-terminus: Nuclear phosphoprotein UL3 homolog (212 aa).

It belongs to the alphaherpesvirinae HHV-1 UL3 family. Phosphorylated.

It localises to the host nucleus. This chain is Nuclear phosphoprotein UL3 homolog, found in Equus caballus (Horse).